Consider the following 243-residue polypeptide: Ion-translocating oxidoreductase complex subunit E (243 aa).

The next 6 helical transmembrane spans lie at L40–L60, A72–L92, D94–G114, A129–I149, I152–F172, and G183–L203.

The protein belongs to the NqrDE/RnfAE family. As to quaternary structure, the complex is composed of six subunits: RnfA, RnfB, RnfC, RnfD, RnfE and RnfG.

Its subcellular location is the cellular chromatophore membrane. In terms of biological role, part of a membrane-bound complex that couples electron transfer with translocation of ions across the membrane. Required for nitrogen fixation. Involved in electron transfer to nitrogenase. This Rhodobacter capsulatus (Rhodopseudomonas capsulata) protein is Ion-translocating oxidoreductase complex subunit E.